A 344-amino-acid polypeptide reads, in one-letter code: 2-methyl-6-phytyl-1,4-hydroquinone methyltransferase, chloroplastic (344 aa).

Residues 1 to 62 (MACSMLNGVD…LTTVTKCTLS (62 aa)) constitute a chloroplast transit peptide. At 63–313 (ASERPASQPR…PVHPLVFLYR (251 aa)) the chain is on the chloroplast intermembrane side. The interval 121–130 (VVDVGGGTGF) is SAM motif I. Residues 166 to 179 (CRIIEGDAEDLPFP) are SAM motif II. The interval 207–220 (RVLKLGGKACLIGP) is SAM motif III. A helical membrane pass occupies residues 314–334 (FLLGALASTYYVLVPIYMWIK). Topologically, residues 335–344 (DKIFPKGMPL) are stromal.

This sequence belongs to the class I-like SAM-binding methyltransferase superfamily. MPBQ/MBSQ MT family.

The protein resides in the plastid. Its subcellular location is the chloroplast inner membrane. The catalysed reaction is 2-methyl-6-phytyl-1,4-benzene-1,4-diol + S-adenosyl-L-methionine = 2,3-dimethyl-6-phytylbenzene-1,4-diol + S-adenosyl-L-homocysteine + H(+). It catalyses the reaction 2-methyl-6-(all-trans-nonaprenyl)benzene-1,4-diol + S-adenosyl-L-methionine = plastoquinol-9 + S-adenosyl-L-homocysteine + H(+). It carries out the reaction 6-geranylgeranyl-2-methylbenzene-1,4-diol + S-adenosyl-L-methionine = 6-geranylgeranyl-2,3-dimethylbenzene-1,4-diol + S-adenosyl-L-homocysteine + H(+). It participates in cofactor biosynthesis; tocopherol biosynthesis. Involved in a key methylation step in both tocopherols (vitamin E) and plastoquinone synthesis. Catalyzes the conversion of 2-methyl-6-phytyl-1,4-hydroquinone (MPBQ) to 2,3-dimethyl-6-phytyl-1,4-hydroquinone (DMPQ, a substrate for tocopherol cyclase), and 2-methyl-6-solanyl-1,4-benzoquinone (MSBQ) to plastoquinone. This is 2-methyl-6-phytyl-1,4-hydroquinone methyltransferase, chloroplastic from Spinacia oleracea (Spinach).